Reading from the N-terminus, the 1867-residue chain is Probable serine/threonine-protein kinase roco8 (1867 aa).

The DEP 1 domain maps to Ser-16–Asn-93. 2 disordered regions span residues Asn-96–Thr-115 and Val-121–Asn-225. Over residues Val-121–Ser-223 the composition is skewed to low complexity. A DEP 2 domain is found at Gly-264–Met-342. LRR repeat units lie at residues Arg-491–Thr-512, Phe-515–Ala-536, Asn-540–Leu-561, Leu-563–Leu-584, Asn-586–Leu-607, Ser-609–Leu-631, Arg-633–Pro-656, and Leu-657–Lys-678. A Roc domain is found at Gly-693–Gln-941. 2 disordered regions span residues Gln-763 to Pro-813 and Ser-942 to Asn-961. A compositionally biased stretch (low complexity) spans Thr-768–Leu-793. The region spanning Pro-974 to Asn-1111 is the COR domain. Residues Ser-1163–Pro-1207 are disordered. In terms of domain architecture, Protein kinase spans Leu-1456–Ile-1864. Residues Ile-1462 to Val-1470 and Lys-1483 each bind ATP. Positions Ser-1509 to Asn-1546 are disordered. Catalysis depends on Asp-1721, which acts as the Proton acceptor.

It belongs to the protein kinase superfamily. TKL Ser/Thr protein kinase family. ROCO subfamily.

The enzyme catalyses L-seryl-[protein] + ATP = O-phospho-L-seryl-[protein] + ADP + H(+). It catalyses the reaction L-threonyl-[protein] + ATP = O-phospho-L-threonyl-[protein] + ADP + H(+). The chain is Probable serine/threonine-protein kinase roco8 (roco8) from Dictyostelium discoideum (Social amoeba).